A 346-amino-acid chain; its full sequence is Short-wave-sensitive opsin 1 (346 aa).

Residues 1 to 31 are Extracellular-facing; it reads MSGEDDFYLFQNISSVGPWDGPQYHLAPVWA. Asn-12 carries N-linked (GlcNAc...) asparagine glycosylation. A helical transmembrane segment spans residues 32 to 56; the sequence is FRLQAAFMGFVFFVGTPLNAIVLVA. Residues 57-68 lie on the Cytoplasmic side of the membrane; it reads TLHYKKLRQPLN. A helical membrane pass occupies residues 69–94; the sequence is YILVNVSLGGFLFCIFSVFTVFIASC. Residues 95 to 108 are Extracellular-facing; it reads HGYFLFGRHVCALE. A disulfide bridge links Cys-105 with Cys-182. Residues 109–128 traverse the membrane as a helical segment; it reads AFLGSVAGLVTGWSLAFLAF. Residues 129–147 are Cytoplasmic-facing; that stretch reads ERYVVICKPFGSIRFNSKH. A helical transmembrane segment spans residues 148-171; that stretch reads ALMVVLATWIIGIGVSIPPFFGWS. Topologically, residues 172 to 197 are extracellular; the sequence is RFIPEGLQCSCGPDWYTVGTKYRSEY. A helical transmembrane segment spans residues 198–225; it reads YTWFLFIFCFIIPLSLICFSYSQLLRTL. At 226 to 247 the chain is on the cytoplasmic side; that stretch reads RAVAAQQQESATTQKAEREVSH. Residues 248-271 traverse the membrane as a helical segment; the sequence is MVVVMVGSFCLCYVPYAALAMYMV. Topologically, residues 272-279 are extracellular; sequence NNRNHGLD. The chain crosses the membrane as a helical span at residues 280–304; sequence LRLVTIPAFFSKSSCVYNPIIYCFM. Lys-291 bears the N6-(retinylidene)lysine mark. At 305-346 the chain is on the cytoplasmic side; it reads NKQFRACILEMVCRKPMADESDVSGSQKTEVSTVSSSKVGPH. The interval 324–346 is disordered; sequence ESDVSGSQKTEVSTVSSSKVGPH. Positions 330-346 are enriched in low complexity; that stretch reads SQKTEVSTVSSSKVGPH.

Belongs to the G-protein coupled receptor 1 family. Opsin subfamily. In terms of processing, phosphorylated on some or all of the serine and threonine residues present in the C-terminal region. As to expression, expressed in the inner and outer segments of cone photoreceptor cells in the retina (at protein level).

The protein localises to the cell membrane. The protein resides in the photoreceptor inner segment. It is found in the cell projection. It localises to the cilium. Its subcellular location is the photoreceptor outer segment. The protein localises to the cytoplasm. The protein resides in the perinuclear region. Visual pigments are the light-absorbing molecules that mediate vision. They consist of an apoprotein, opsin, covalently linked to cis-retinal. Required for the maintenance of cone outer segment organization in the ventral retina, but not essential for the maintenance of functioning cone photoreceptors. Involved in ensuring correct abundance and localization of retinal membrane proteins. May increase spectral sensitivity in dim light. This is Short-wave-sensitive opsin 1 (Opn1sw) from Mus musculus (Mouse).